We begin with the raw amino-acid sequence, 130 residues long: 3-aminoacrylate deaminase RutC (130 aa).

This sequence belongs to the RutC family.

The enzyme catalyses (Z)-3-aminoacrylate + H2O + H(+) = 3-oxopropanoate + NH4(+). Its function is as follows. Involved in pyrimidine catabolism. Catalyzes the deamination of 3-aminoacrylate to malonic semialdehyde, a reaction that can also occur spontaneously. RutC may facilitate the reaction and modulate the metabolic fitness, rather than catalyzing essential functions. This is 3-aminoacrylate deaminase RutC from Methylorubrum extorquens (strain CM4 / NCIMB 13688) (Methylobacterium extorquens).